A 204-amino-acid chain; its full sequence is MVDFILNAQVRSDLGKGASRRLRRNAGLVPAVVYGGDKEPQSVTLELREIAKLLENEAAFSHVIALNVGGAKETVLIKALQRHPAKGFVMHADFLRVVADHKLTAHVPLHFINEEVAVGVKQAGGEISHTISEVEVSCLPKDLPEFIEVDMAKVELGQIVHLSDLKAPKGVELVQLAHGNDLAVANIHASRVVKEEGSEEGAAE.

The protein belongs to the bacterial ribosomal protein bL25 family. CTC subfamily. Part of the 50S ribosomal subunit; part of the 5S rRNA/L5/L18/L25 subcomplex. Contacts the 5S rRNA. Binds to the 5S rRNA independently of L5 and L18.

Functionally, this is one of the proteins that binds to the 5S RNA in the ribosome where it forms part of the central protuberance. This Pseudomonas aeruginosa (strain LESB58) protein is Large ribosomal subunit protein bL25.